The primary structure comprises 287 residues: tRNA-cytidine(32) 2-sulfurtransferase (287 aa).

The short motif at 39-44 (SGGKDS) is the PP-loop motif element. Cys-114, Cys-117, and Cys-205 together coordinate [4Fe-4S] cluster.

It belongs to the TtcA family. In terms of assembly, homodimer. Mg(2+) is required as a cofactor. It depends on [4Fe-4S] cluster as a cofactor.

Its subcellular location is the cytoplasm. It carries out the reaction cytidine(32) in tRNA + S-sulfanyl-L-cysteinyl-[cysteine desulfurase] + AH2 + ATP = 2-thiocytidine(32) in tRNA + L-cysteinyl-[cysteine desulfurase] + A + AMP + diphosphate + H(+). It participates in tRNA modification. Its function is as follows. Catalyzes the ATP-dependent 2-thiolation of cytidine in position 32 of tRNA, to form 2-thiocytidine (s(2)C32). The sulfur atoms are provided by the cysteine/cysteine desulfurase (IscS) system. This Dechloromonas aromatica (strain RCB) protein is tRNA-cytidine(32) 2-sulfurtransferase.